Consider the following 206-residue polypeptide: Translation machinery-associated protein 22 (206 aa).

The region spanning 98–169 is the SUI1 domain; it reads VVIKREARTK…EVEKYIHSLL (72 aa). Positions 184 to 206 are disordered; that stretch reads SQKKKKKPTDEANSNNNNNNNNK. The span at 196–206 shows a compositional bias: low complexity; that stretch reads NSNNNNNNNNK.

The protein belongs to the DENR family. In terms of assembly, interacts with the 40S ribosomal subunit.

It localises to the cytoplasm. The polypeptide is Translation machinery-associated protein 22 (TMA22) (Vanderwaltozyma polyspora (strain ATCC 22028 / DSM 70294 / BCRC 21397 / CBS 2163 / NBRC 10782 / NRRL Y-8283 / UCD 57-17) (Kluyveromyces polysporus)).